A 435-amino-acid polypeptide reads, in one-letter code: GTPase Der (435 aa).

EngA-type G domains lie at 3 to 167 and 176 to 351; these read NIVA…KDEG and PRIA…ENRG. GTP contacts are provided by residues 9–16, 56–60, 119–122, 182–189, 229–233, and 294–297; these read GRPNVGKS, DTGGY, NKSD, GRPNAGKS, DTAGI, and NKWD. In terms of domain architecture, KH-like spans 352–435; it reads KRIPTSELND…VPISIVYRKK (84 aa).

It belongs to the TRAFAC class TrmE-Era-EngA-EngB-Septin-like GTPase superfamily. EngA (Der) GTPase family. In terms of assembly, associates with the 50S ribosomal subunit.

Functionally, GTPase that plays an essential role in the late steps of ribosome biogenesis. This is GTPase Der from Cytophaga hutchinsonii (strain ATCC 33406 / DSM 1761 / CIP 103989 / NBRC 15051 / NCIMB 9469 / D465).